The sequence spans 172 residues: Ribosome maturation factor RimM (172 aa).

The PRC barrel domain maps to 96-168; sequence EGEFYYHQII…RVDVELMEGL (73 aa).

The protein belongs to the RimM family. As to quaternary structure, binds ribosomal protein uS19.

It is found in the cytoplasm. Functionally, an accessory protein needed during the final step in the assembly of 30S ribosomal subunit, possibly for assembly of the head region. Essential for efficient processing of 16S rRNA. May be needed both before and after RbfA during the maturation of 16S rRNA. It has affinity for free ribosomal 30S subunits but not for 70S ribosomes. The polypeptide is Ribosome maturation factor RimM (Streptococcus pyogenes serotype M3 (strain ATCC BAA-595 / MGAS315)).